The following is a 799-amino-acid chain: Phenylalanine--tRNA ligase beta subunit (799 aa).

The tRNA-binding domain maps to 40–147; it reads KSHLSSVITV…KDTTLGISVR (108 aa). The region spanning 402-479 is the B5 domain; the sequence is SKTVTIETNL…RTIGYASIRT (78 aa). 4 residues coordinate Mg(2+): Asp-457, Asp-463, Glu-466, and Glu-467. The region spanning 707–799 is the FDX-ACB domain; that stretch reads SHFPQGQLDL…TAKSNGYSLR (93 aa).

It belongs to the phenylalanyl-tRNA synthetase beta subunit family. Type 1 subfamily. Tetramer of two alpha and two beta subunits. It depends on Mg(2+) as a cofactor.

The protein resides in the cytoplasm. The enzyme catalyses tRNA(Phe) + L-phenylalanine + ATP = L-phenylalanyl-tRNA(Phe) + AMP + diphosphate + H(+). The polypeptide is Phenylalanine--tRNA ligase beta subunit (Leptospira biflexa serovar Patoc (strain Patoc 1 / Ames)).